Here is a 438-residue protein sequence, read N- to C-terminus: DNA polymerase IV 1 (438 aa).

One can recognise a UmuC domain in the interval L46–G226. Mg(2+) is bound by residues D50 and D143. E144 is an active-site residue.

Belongs to the DNA polymerase type-Y family. In terms of assembly, monomer. Requires Mg(2+) as cofactor.

Its subcellular location is the cytoplasm. The enzyme catalyses DNA(n) + a 2'-deoxyribonucleoside 5'-triphosphate = DNA(n+1) + diphosphate. Its function is as follows. Poorly processive, error-prone DNA polymerase involved in untargeted mutagenesis. Copies undamaged DNA at stalled replication forks, which arise in vivo from mismatched or misaligned primer ends. These misaligned primers can be extended by PolIV. Exhibits no 3'-5' exonuclease (proofreading) activity. May be involved in translesional synthesis, in conjunction with the beta clamp from PolIII. This chain is DNA polymerase IV 1 (dinB1), found in Mesorhizobium japonicum (strain LMG 29417 / CECT 9101 / MAFF 303099) (Mesorhizobium loti (strain MAFF 303099)).